A 608-amino-acid polypeptide reads, in one-letter code: Actin-related protein 8 (608 aa).

Residues methionine 1–valine 20 are disordered. ATP is bound at residue aspartate 272 to alanine 275.

The protein belongs to the actin family. ARP8 subfamily. Component of the chromatin remodeling Ino80 complex. Exists as monomers and dimers, but the dimer is most probably the biologically relevant form required for stable interactions with histones that exploits the twofold symmetry of the nucleosome core.

The protein resides in the nucleus. Functionally, plays an important role in the functional organization of mitotic chromosomes. Exhibits low basal ATPase activity, and unable to polymerize. Proposed core component of the chromatin remodeling INO80 complex which is involved in transcriptional regulation, DNA replication and probably DNA repair. Strongly prefer nucleosomes and H3-H4 tetramers over H2A-H2B dimers, suggesting it may act as a nucleosome recognition module within the complex. The sequence is that of Actin-related protein 8 from Drosophila pseudoobscura pseudoobscura (Fruit fly).